A 608-amino-acid chain; its full sequence is Isocitrate dehydrogenase kinase/phosphatase (608 aa).

ATP-binding positions include 328-334 (APGIKGL) and lysine 349. Aspartate 384 is a catalytic residue.

It belongs to the AceK family.

Its subcellular location is the cytoplasm. The enzyme catalyses L-seryl-[isocitrate dehydrogenase] + ATP = O-phospho-L-seryl-[isocitrate dehydrogenase] + ADP + H(+). Functionally, bifunctional enzyme which can phosphorylate or dephosphorylate isocitrate dehydrogenase (IDH) on a specific serine residue. This is a regulatory mechanism which enables bacteria to bypass the Krebs cycle via the glyoxylate shunt in response to the source of carbon. When bacteria are grown on glucose, IDH is fully active and unphosphorylated, but when grown on acetate or ethanol, the activity of IDH declines drastically concomitant with its phosphorylation. This Cupriavidus pinatubonensis (strain JMP 134 / LMG 1197) (Cupriavidus necator (strain JMP 134)) protein is Isocitrate dehydrogenase kinase/phosphatase.